The primary structure comprises 431 residues: Large envelope protein (431 aa).

Residue glycine 2 is the site of N-myristoyl glycine; by host attachment. The pre-S1 stretch occupies residues 2 to 148 (GNNIKVTFNP…PPLRDTHPHL (147 aa)). The interval 2–207 (GNNIKVTFNP…PSTTGDPALS (206 aa)) is pre-S. The Virion surface; in external conformation portion of the chain corresponds to 2-214 (GNNIKVTFNP…ALSPEMSPSS (213 aa)). The Intravirion; in internal conformation portion of the chain corresponds to 2 to 286 (GNNIKVTFNP…NGFRWMYLRR (285 aa)). N-linked (GlcNAc...) asparagine glycosylation occurs at asparagine 3. The disordered stretch occupies residues 115-147 (IPRGLVPPQTPTNRDQGRKPTPPTPPLRDTHPH). The interval 149-207 (TMKNQTFHLQGFVDGLRDLTTTERQHNAYGDPFTTLSPAVPTVSTILSPPSTTGDPALS) is pre-S2. Residues 215-235 (LLGLLAGLQVVYFLWTKILTI) traverse the membrane as a helical segment. Residues 236–286 (AQNLDWWWTSLSFPGGIPECTGQNSQFQTCKHLPTSCPPTCNGFRWMYLRR) are Intravirion; in external conformation-facing. A helical transmembrane segment spans residues 287 to 307 (FIIYLLVLLLCLIFLLVLLDW). Over 308–379 (KGFIPVCPLQ…WALARFSWLN (72 aa)) the chain is Virion surface. An N-linked (GlcNAc...) asparagine; by host glycan is attached at asparagine 351. The helical transmembrane segment at 380–400 (LLVPLLQWLGGISLIAWFLLI) threads the bilayer. Residues 401–406 (WMIWFW) are Intravirion-facing. Residues 407 to 429 (GPALLSILPPFIPIFVLFFLIWV) traverse the membrane as a helical segment. The Virion surface portion of the chain corresponds to 430–431 (YI).

This sequence belongs to the orthohepadnavirus major surface antigen family. In its internal form (Li-HBsAg), interacts with the capsid protein and with the isoform S. Interacts with host chaperone CANX. In terms of assembly, associates with host chaperone CANX through its pre-S2 N glycan; this association may be essential for isoform M proper secretion. As to quaternary structure, interacts with isoform L. Interacts with the antigens of satellite virus HDV (HDVAgs); this interaction is required for encapsidation of HDV genomic RNA. Post-translationally, isoform M is N-terminally acetylated by host at a ratio of 90%, and N-glycosylated by host at the pre-S2 region. Myristoylated.

It is found in the virion membrane. Functionally, the large envelope protein exists in two topological conformations, one which is termed 'external' or Le-HBsAg and the other 'internal' or Li-HBsAg. In its external conformation the protein attaches the virus to cell receptors and thereby initiating infection. This interaction determines the species specificity and liver tropism. This attachment induces virion internalization predominantly through caveolin-mediated endocytosis. The large envelope protein also assures fusion between virion membrane and endosomal membrane. In its internal conformation the protein plays a role in virion morphogenesis and mediates the contact with the nucleocapsid like a matrix protein. Its function is as follows. The middle envelope protein plays an important role in the budding of the virion. It is involved in the induction of budding in a nucleocapsid independent way. In this process the majority of envelope proteins bud to form subviral lipoprotein particles of 22 nm of diameter that do not contain a nucleocapsid. This is Large envelope protein from Marmota monax (Woodchuck).